A 380-amino-acid chain; its full sequence is Cytochrome b (380 aa).

4 helical membrane-spanning segments follow: residues 33-53 (FGSL…FLAM), 77-98 (WLIR…FLHV), 113-133 (WNMG…GYVL), and 178-198 (FFAF…VHLL). Heme b contacts are provided by His-83 and His-97. His-182 and His-196 together coordinate heme b. His-201 is an a ubiquinone binding site. The next 4 membrane-spanning stretches (helical) occupy residues 226-246 (IKDL…VLFF), 288-308 (LGGV…PLLH), 320-340 (ITQT…WIGG), and 347-367 (FIMI…IFMP).

It belongs to the cytochrome b family. The cytochrome bc1 complex contains 11 subunits: 3 respiratory subunits (MT-CYB, CYC1 and UQCRFS1), 2 core proteins (UQCRC1 and UQCRC2) and 6 low-molecular weight proteins (UQCRH/QCR6, UQCRB/QCR7, UQCRQ/QCR8, UQCR10/QCR9, UQCR11/QCR10 and a cleavage product of UQCRFS1). This cytochrome bc1 complex then forms a dimer. The cofactor is heme b.

It is found in the mitochondrion inner membrane. Functionally, component of the ubiquinol-cytochrome c reductase complex (complex III or cytochrome b-c1 complex) that is part of the mitochondrial respiratory chain. The b-c1 complex mediates electron transfer from ubiquinol to cytochrome c. Contributes to the generation of a proton gradient across the mitochondrial membrane that is then used for ATP synthesis. In Synaptomys borealis (Northern bog lemming), this protein is Cytochrome b (MT-CYB).